The chain runs to 513 residues: Melianol synthase CYP71BQ4 (513 aa).

Residues 10–30 (MLHLPSLPVLLSFLLFLLMLI) traverse the membrane as a helical segment. Residue C451 participates in heme binding.

It belongs to the cytochrome P450 family. Heme is required as a cofactor. As to expression, accumulates in mature fruits and in juice vesicles.

Its subcellular location is the membrane. The enzyme catalyses dihydroniloticin + 2 reduced [NADPH--hemoprotein reductase] + 2 O2 = melianol + 2 oxidized [NADPH--hemoprotein reductase] + 3 H2O + 2 H(+). It participates in secondary metabolite biosynthesis; terpenoid biosynthesis. Monooxygenase involved in the biosynthesis of limonoids triterpene natural products such as limonin, a compound with insecticidal activity responsible for the bitter taste in citrus. Catalyzes the conversion of dihydroniloticin to the protolimonoid melianol. The protein is Melianol synthase CYP71BQ4 of Citrus sinensis (Sweet orange).